A 655-amino-acid polypeptide reads, in one-letter code: Probable alpha-galactosidase D (655 aa).

Residues 1–16 (MLPKIFYLSLLPAALG) form the signal peptide. Residues Asn47 and Asn91 are each glycosylated (N-linked (GlcNAc...) asparagine). Cysteines 124 and 155 form a disulfide. Asp153 functions as the Nucleophile in the catalytic mechanism. N-linked (GlcNAc...) asparagine glycosylation is found at Asn180 and Asn189. 198-202 (EWGID) is a substrate binding site. Asp220 serves as the catalytic Proton donor. N-linked (GlcNAc...) asparagine glycans are attached at residues Asn349, Asn436, Asn458, Asn503, Asn537, Asn541, and Asn580.

Belongs to the glycosyl hydrolase 27 family.

It localises to the secreted. It catalyses the reaction Hydrolysis of terminal, non-reducing alpha-D-galactose residues in alpha-D-galactosides, including galactose oligosaccharides, galactomannans and galactolipids.. Functionally, hydrolyzes a variety of simple alpha-D-galactoside as well as more complex molecules such as oligosaccharides and polysaccharides. The polypeptide is Probable alpha-galactosidase D (aglD) (Aspergillus flavus (strain ATCC 200026 / FGSC A1120 / IAM 13836 / NRRL 3357 / JCM 12722 / SRRC 167)).